We begin with the raw amino-acid sequence, 58 residues long: MATIKVTQTKSSIGRLPKHKATLRGLGLRRINHTVELEDTPCIRGMINKVYYMVKVEE.

The protein belongs to the universal ribosomal protein uL30 family. Part of the 50S ribosomal subunit.

This Vibrio vulnificus (strain CMCP6) protein is Large ribosomal subunit protein uL30.